A 317-amino-acid polypeptide reads, in one-letter code: Aspartate carbamoyltransferase catalytic subunit (317 aa).

Residues R55 and T56 each contribute to the carbamoyl phosphate site. K83 lines the L-aspartate pocket. Carbamoyl phosphate-binding residues include R105, H138, and Q141. The L-aspartate site is built by R171 and R225. G266 and P267 together coordinate carbamoyl phosphate.

Belongs to the aspartate/ornithine carbamoyltransferase superfamily. ATCase family. In terms of assembly, heterododecamer (2C3:3R2) of six catalytic PyrB chains organized as two trimers (C3), and six regulatory PyrI chains organized as three dimers (R2).

It catalyses the reaction carbamoyl phosphate + L-aspartate = N-carbamoyl-L-aspartate + phosphate + H(+). The protein operates within pyrimidine metabolism; UMP biosynthesis via de novo pathway; (S)-dihydroorotate from bicarbonate: step 2/3. Catalyzes the condensation of carbamoyl phosphate and aspartate to form carbamoyl aspartate and inorganic phosphate, the committed step in the de novo pyrimidine nucleotide biosynthesis pathway. This Mycobacteroides abscessus (strain ATCC 19977 / DSM 44196 / CCUG 20993 / CIP 104536 / JCM 13569 / NCTC 13031 / TMC 1543 / L948) (Mycobacterium abscessus) protein is Aspartate carbamoyltransferase catalytic subunit.